Consider the following 304-residue polypeptide: N-carbamoyl-D-amino acid hydrolase (304 aa).

In terms of domain architecture, CN hydrolase spans 5–276; that stretch reads MILAVGQQGP…DEVITAAVDL (272 aa). Catalysis depends on residues glutamate 47, lysine 127, and cysteine 172.

Homotetramer.

The catalysed reaction is an N-carbamoyl-D-amino acid + H2O + 2 H(+) = a D-alpha-amino acid + NH4(+) + CO2. Functionally, the enzyme catalyzes the hydrolysis of N-carbamoyl-D-amino acids to the corresponding which are useful intermediates in the preparation of beta-lactam antibiotics. Industrial production of beta-lactam antibiotics is now being developed using this enzyme. In Rhizobium radiobacter (Agrobacterium tumefaciens), this protein is N-carbamoyl-D-amino acid hydrolase.